Here is a 298-residue protein sequence, read N- to C-terminus: GTP cyclohydrolase FolE2 (298 aa).

This sequence belongs to the GTP cyclohydrolase IV family.

It catalyses the reaction GTP + H2O = 7,8-dihydroneopterin 3'-triphosphate + formate + H(+). Its pathway is cofactor biosynthesis; 7,8-dihydroneopterin triphosphate biosynthesis; 7,8-dihydroneopterin triphosphate from GTP: step 1/1. Functionally, converts GTP to 7,8-dihydroneopterin triphosphate. This is GTP cyclohydrolase FolE2 from Pseudomonas aeruginosa (strain LESB58).